The sequence spans 149 residues: Urease accessory protein UreE (149 aa).

This sequence belongs to the UreE family.

The protein localises to the cytoplasm. In terms of biological role, involved in urease metallocenter assembly. Binds nickel. Probably functions as a nickel donor during metallocenter assembly. The chain is Urease accessory protein UreE from Prochlorococcus marinus (strain MIT 9312).